Reading from the N-terminus, the 576-residue chain is Proline--tRNA ligase (576 aa).

It belongs to the class-II aminoacyl-tRNA synthetase family. ProS type 1 subfamily. Homodimer.

Its subcellular location is the cytoplasm. It catalyses the reaction tRNA(Pro) + L-proline + ATP = L-prolyl-tRNA(Pro) + AMP + diphosphate. Catalyzes the attachment of proline to tRNA(Pro) in a two-step reaction: proline is first activated by ATP to form Pro-AMP and then transferred to the acceptor end of tRNA(Pro). As ProRS can inadvertently accommodate and process non-cognate amino acids such as alanine and cysteine, to avoid such errors it has two additional distinct editing activities against alanine. One activity is designated as 'pretransfer' editing and involves the tRNA(Pro)-independent hydrolysis of activated Ala-AMP. The other activity is designated 'posttransfer' editing and involves deacylation of mischarged Ala-tRNA(Pro). The misacylated Cys-tRNA(Pro) is not edited by ProRS. This chain is Proline--tRNA ligase, found in Leptospira interrogans serogroup Icterohaemorrhagiae serovar copenhageni (strain Fiocruz L1-130).